Reading from the N-terminus, the 224-residue chain is Ribonuclease T (224 aa).

In terms of domain architecture, Exonuclease spans 20–194 (VVIDVETAGF…YDTERTAELF (175 aa)). 4 residues coordinate Mg(2+): Asp23, Glu25, His181, and Asp186. The active-site Proton donor/acceptor is the His181.

The protein belongs to the RNase T family. As to quaternary structure, homodimer. Requires Mg(2+) as cofactor.

Functionally, trims short 3' overhangs of a variety of RNA species, leaving a one or two nucleotide 3' overhang. Responsible for the end-turnover of tRNA: specifically removes the terminal AMP residue from uncharged tRNA (tRNA-C-C-A). Also appears to be involved in tRNA biosynthesis. In Shewanella putrefaciens (strain CN-32 / ATCC BAA-453), this protein is Ribonuclease T.